A 245-amino-acid chain; its full sequence is Galectin-3 (245 aa).

Residues 1–30 (MADGFSLNDALAGSGNPNPQGWPGAWGNQP) are disordered. An N-acetylalanine modification is found at Ala-2. A Phosphoserine; by CK1 modification is found at Ser-6. Tandem repeats lie at residues 35–43 (YPGASYPGA), 44–52 (YPGQAPPGA), 53–61 (YPGQAPPGA), and 62–70 (YPGPTAPGA). The interval 35-99 (YPGASYPGAY…PSAPGAYPAA (65 aa)) is 7 X 9 AA tandem repeats of Y-P-G-X(3)-P-[GS]-A. Residues 47-68 (QAPPGAYPGQAPPGAYPGPTAP) form a disordered region. The stretch at 71-78 (YPGPAPGA) is one 5; approximate repeat. The 6; approximate repeat unit spans residues 79–88 (YPGQPGASGA). A 7; approximate repeat occupies 89-99 (YPSAPGAYPAA). In terms of domain architecture, Galectin spans 113–243 (YKLPLAGGVM…DITLTSAAPT (131 aa)). 176 to 182 (WGREERQ) is an a beta-D-galactoside binding site. At Ser-183 the chain carries Phosphoserine. The Nuclear export signal motif lies at 221–236 (KNLREINQMEISGDIT).

Probably forms homo- or heterodimers. Interacts with DMBT1. Interacts with CD6 and ALCAM. Forms a complex with the ITGA3, ITGB1 and CSPG4. Interacts with LGALS3BP, LYPD3, ZFTRAF1 and UACA. Interacts with TRIM16; this interaction mediates autophagy of damage endomembranes. Interacts with cargo receptor TMED10; the interaction mediates the translocation from the cytoplasm into the ERGIC (endoplasmic reticulum-Golgi intermediate compartment) and thereby secretion. Interacts with and inhibits by binding NCR3/NKp30.

The protein localises to the cytoplasm. Its subcellular location is the nucleus. The protein resides in the secreted. In terms of biological role, galactose-specific lectin which binds IgE. May mediate with the alpha-3, beta-1 integrin the stimulation by CSPG4 of endothelial cells migration. Together with DMBT1, required for terminal differentiation of columnar epithelial cells during early embryogenesis. In the nucleus: acts as a pre-mRNA splicing factor. Involved in acute inflammatory responses including neutrophil activation and adhesion, chemoattraction of monocytes macrophages, opsonization of apoptotic neutrophils, and activation of mast cells. Together with TRIM16, coordinates the recognition of membrane damage with mobilization of the core autophagy regulators ATG16L1 and BECN1 in response to damaged endomembranes. When secreted, interacts with NK cell-activating receptor NCR3/NKp30 acting as an inhibitory ligand which antagonizes NK cell attack. This chain is Galectin-3 (LGALS3), found in Cricetulus longicaudatus (Long-tailed dwarf hamster).